The chain runs to 215 residues: Adenylate kinase (215 aa).

10 to 15 (GAGKGT) contacts ATP. The segment at 30 to 59 (STGDMLRAAVKAGSPLGQQVKGVMDSGGLV) is NMP. Residues T31, R36, 57 to 59 (GLV), 85 to 88 (GFPR), and Q92 each bind AMP. Residues 122-159 (GRRVHPASGRVYHTEHNPPKVAGKDDVTGEELIQREDD) form an LID region. ATP contacts are provided by residues R123 and 132–133 (VY). Residues R156 and R167 each contribute to the AMP site. G201 serves as a coordination point for ATP.

The protein belongs to the adenylate kinase family. As to quaternary structure, monomer.

It localises to the cytoplasm. The catalysed reaction is AMP + ATP = 2 ADP. It participates in purine metabolism; AMP biosynthesis via salvage pathway; AMP from ADP: step 1/1. Catalyzes the reversible transfer of the terminal phosphate group between ATP and AMP. Plays an important role in cellular energy homeostasis and in adenine nucleotide metabolism. This chain is Adenylate kinase, found in Pseudomonas aeruginosa (strain LESB58).